Consider the following 511-residue polypeptide: GATA zinc finger domain-containing protein 15 (511 aa).

The segment covering 1–111 has biased composition (low complexity); the sequence is TNNNNFNNIN…FNDNCNNNSN (111 aa). Disordered regions lie at residues 1-194, 214-313, and 325-355; these read TNNN…NTFF, NVNN…NENK, and NLQY…VLSP. Positions 124–135 are enriched in polar residues; sequence SLQNINQYPLSP. Residues 136–166 are compositionally biased toward low complexity; the sequence is NNNKSSNQHLSHSSSNVNSQYYQTPYYQPSQ. Over residues 167–185 the composition is skewed to polar residues; the sequence is KQNSPNSTPPLNGCQYENH. Low complexity-rich tracts occupy residues 214–309 and 337–351; these read NVNN…NNDN and SGST…PTSP. Residues 453 to 478 form a GATA-type zinc finger; that stretch reads CQACGTRASPEWRKGPDGFKSLCNAC.

The polypeptide is GATA zinc finger domain-containing protein 15 (gtaO) (Dictyostelium discoideum (Social amoeba)).